A 159-amino-acid polypeptide reads, in one-letter code: Protein-export protein SecB (159 aa).

Belongs to the SecB family. As to quaternary structure, homotetramer, a dimer of dimers. One homotetramer interacts with 1 SecA dimer.

It is found in the cytoplasm. Functionally, one of the proteins required for the normal export of preproteins out of the cell cytoplasm. It is a molecular chaperone that binds to a subset of precursor proteins, maintaining them in a translocation-competent state. It also specifically binds to its receptor SecA. In Pseudomonas fluorescens (strain SBW25), this protein is Protein-export protein SecB.